Reading from the N-terminus, the 58-residue chain is Pepsin-1 (58 aa).

The propeptide at 1–41 (LLQVPLEKGQSAREYLQEQGLWEQYRLKYPYNPMAKFDPSF) is activation peptide.

This sequence belongs to the peptidase A1 family.

This Thunnus orientalis (North Pacific bluefin tuna) protein is Pepsin-1.